Reading from the N-terminus, the 40-residue chain is Chaperonin HSP60, mitochondrial (40 aa).

The protein belongs to the chaperonin (HSP60) family.

The protein localises to the mitochondrion. In terms of biological role, implicated in mitochondrial protein import and macromolecular assembly. May facilitate the correct folding of imported proteins. May also prevent misfolding and promote the refolding and proper assembly of unfolded polypeptides generated under stress conditions in the mitochondrial matrix. In Solanum tuberosum (Potato), this protein is Chaperonin HSP60, mitochondrial.